Reading from the N-terminus, the 331-residue chain is Flavonol synthase 1 (331 aa).

A Fe2OG dioxygenase domain is found at D191–P292. Fe cation contacts are provided by H217, D219, and H273. R283 contributes to the 2-oxoglutarate binding site.

Belongs to the iron/ascorbate-dependent oxidoreductase family. It depends on L-ascorbate as a cofactor. Fe(2+) serves as cofactor. Expressed in young cromes.

It carries out the reaction a (2R,3R)-dihydroflavonol + 2-oxoglutarate + O2 = a flavonol + succinate + CO2 + H2O. It catalyses the reaction (2R,3R)-dihydrokaempferol + 2-oxoglutarate + O2 = kaempferol + succinate + CO2 + H2O + H(+). The catalysed reaction is (2R,3R)-dihydroquercetin + 2-oxoglutarate + O2 = quercetin + succinate + CO2 + H2O + H(+). The enzyme catalyses (2R,3R)-dihydromyricetin + 2-oxoglutarate + O2 = myricetin + succinate + CO2 + H2O + H(+). The protein operates within flavonoid metabolism. Its function is as follows. Catalyzes the formation of flavonols from dihydroflavonols. Can act on dihydrokaempferol to produce kaempferol, on dihydroquercetin to produce quercitin and on dihydromyricetin to produce myricetin. In Crocosmia x crocosmiiflora (Montbretia), this protein is Flavonol synthase 1.